Consider the following 272-residue polypeptide: 2-dehydro-3-deoxyphosphooctonate aldolase (272 aa).

It belongs to the KdsA family.

The protein localises to the cytoplasm. The enzyme catalyses D-arabinose 5-phosphate + phosphoenolpyruvate + H2O = 3-deoxy-alpha-D-manno-2-octulosonate-8-phosphate + phosphate. It functions in the pathway carbohydrate biosynthesis; 3-deoxy-D-manno-octulosonate biosynthesis; 3-deoxy-D-manno-octulosonate from D-ribulose 5-phosphate: step 2/3. Its pathway is bacterial outer membrane biogenesis; lipopolysaccharide biosynthesis. The sequence is that of 2-dehydro-3-deoxyphosphooctonate aldolase from Pelobacter propionicus (strain DSM 2379 / NBRC 103807 / OttBd1).